Consider the following 476-residue polypeptide: Ribosomal RNA small subunit methyltransferase F (476 aa).

Residues 124-130 (ASAPGSK), glutamate 148, aspartate 175, and aspartate 193 contribute to the S-adenosyl-L-methionine site. Cysteine 246 (nucleophile) is an active-site residue.

Belongs to the class I-like SAM-binding methyltransferase superfamily. RsmB/NOP family.

It localises to the cytoplasm. The enzyme catalyses cytidine(1407) in 16S rRNA + S-adenosyl-L-methionine = 5-methylcytidine(1407) in 16S rRNA + S-adenosyl-L-homocysteine + H(+). Specifically methylates the cytosine at position 1407 (m5C1407) of 16S rRNA. The protein is Ribosomal RNA small subunit methyltransferase F of Photobacterium profundum (strain SS9).